The chain runs to 630 residues: 1-deoxy-D-xylulose-5-phosphate synthase (630 aa).

Residues His-72 and 113-115 (GHS) each bind thiamine diphosphate. Residue Asp-144 coordinates Mg(2+). Thiamine diphosphate contacts are provided by residues 145 to 146 (GA), Asn-173, Tyr-284, and Glu-367. Asn-173 lines the Mg(2+) pocket.

It belongs to the transketolase family. DXPS subfamily. In terms of assembly, homodimer. Requires Mg(2+) as cofactor. The cofactor is thiamine diphosphate.

The enzyme catalyses D-glyceraldehyde 3-phosphate + pyruvate + H(+) = 1-deoxy-D-xylulose 5-phosphate + CO2. The protein operates within metabolic intermediate biosynthesis; 1-deoxy-D-xylulose 5-phosphate biosynthesis; 1-deoxy-D-xylulose 5-phosphate from D-glyceraldehyde 3-phosphate and pyruvate: step 1/1. In terms of biological role, catalyzes the acyloin condensation reaction between C atoms 2 and 3 of pyruvate and glyceraldehyde 3-phosphate to yield 1-deoxy-D-xylulose-5-phosphate (DXP). The sequence is that of 1-deoxy-D-xylulose-5-phosphate synthase from Geobacillus thermodenitrificans (strain NG80-2).